A 263-amino-acid polypeptide reads, in one-letter code: Probable ABC transporter permease protein ycf63 (263 aa).

5 helical membrane-spanning segments follow: residues 43 to 63 (IVGP…SMVF), 70 to 89 (EFLY…IAFT), 150 to 170 (ILSI…AFVM), 188 to 208 (ISDF…IGFI), and 230 to 250 (SVVT…YFMF).

It belongs to the MlaE permease family.

It localises to the plastid. The protein resides in the chloroplast membrane. Could be part of an ABC transporter complex. This is Probable ABC transporter permease protein ycf63 (ycf63) from Pyropia yezoensis (Susabi-nori).